The following is a 43-amino-acid chain: Truncated K3L homolog (43 aa).

It belongs to the orthopoxvirus OPG041 family.

The sequence is that of Truncated K3L homolog (OPG041) from Cynomys gunnisoni (Gunnison's prairie dog).